The chain runs to 239 residues: MGRAYQNRKESMAKTSDMKAKVYSRYGREIYVSAKSGGVDPTANLALRSLIERAKKDQVPGHVIDKALDKAKGGGGEDYSPARYEGYGPGGSMALIECLTDNPNRTFGDVRMAFTKTKCKIGTQGTVSHMFDHVAIFVFAHEDEDAVLEALMDADVDVSEIENDNGMLTVFTPNTEYFKAKQALVEAFGELEFEVDEIQFIPQSYTTISAEDMDMFDKFMAMLNDLDDVQNVYHNVDLG.

This sequence belongs to the TACO1 family.

It is found in the cytoplasm. In Alcanivorax borkumensis (strain ATCC 700651 / DSM 11573 / NCIMB 13689 / SK2), this protein is Probable transcriptional regulatory protein ABO_1803.